Here is a 526-residue protein sequence, read N- to C-terminus: Microphthalmia-associated transcription factor (526 aa).

S5 is modified (phosphoserine; by MTOR). Disordered stretches follow at residues 20–54 (EPKT…STMT) and 155–179 (VLSS…SAPN). Residues 34 to 44 (SSSSAEHSGAS) show a composition bias toward low complexity. Residue S180 is modified to Phosphoserine; by MAPK. The segment at 224-291 (DDVIDDIISL…PANLPNIKRE (68 aa)) is transactivation. The residue at position 280 (S280) is a Phosphoserine. A Glycyl lysine isopeptide (Lys-Gly) (interchain with G-Cter in SUMO) cross-link involves residue K289. One can recognise a bHLH domain in the interval 311 to 364 (QKKDNHNLIERRRRFNINDRIKELGTLIPKSNDPDMRWNKGTILKASVDYIRKL). Residues 355-401 (KASVDYIRKLQREQQRAKDLENRQKKLEHANRHLLLRVQELEMQARA) adopt a coiled-coil conformation. A leucine-zipper region spans residues 374–395 (LENRQKKLEHANRHLLLRVQEL). Residues 401-431 (AHGLSLIPSTGLCSPDLVNRIIKQEPVLENC) are DNA-binding regulation. S405 bears the Phosphoserine; by GSK3 mark. S414 is subject to Phosphoserine. K423 is covalently cross-linked (Glycyl lysine isopeptide (Lys-Gly) (interchain with G-Cter in SUMO)). A Phosphoserine modification is found at S491. The segment at 496–526 (TDPLLSSVSPGASKTSSRRSSMSAEETEHAC) is disordered. Over residues 507 to 519 (ASKTSSRRSSMSA) the composition is skewed to low complexity. S516 is modified (phosphoserine; by RPS6KA1).

This sequence belongs to the MiT/TFE family. As to quaternary structure, homodimer or heterodimer; dimerization is mediated via the coiled coil region. Efficient DNA binding requires dimerization with another bHLH protein. Binds DNA in the form of homodimer or heterodimer with either TFE3, TFEB or TFEC. Interacts with small GTPases Rag (RagA/RRAGA, RagB/RRAGB, RagC/RRAGC and/or RagD/RRAGD); promoting its recruitment to lysosomal membrane in the presence of nutrients. Interacts with KARS1. Identified in a complex with HINT1 and CTNNB1. Interacts with VSX2. When nutrients are present, phosphorylation by MTOR at Ser-5 via non-canonical mTORC1 pathway promotes ubiquitination by the SCF(BTRC) complex, followed by degradation. Phosphorylation at Ser-405 significantly enhances the ability to bind the tyrosinase promoter. Phosphorylation by MARK3/cTAK1 at Ser-280 promotes association with 14-3-3/YWHA adapters and retention in the cytosol. Phosphorylated at Ser-180 and Ser-516 following KIT signaling, triggering a short live activation: Phosphorylation at Ser-180 and Ser-516 by MAPK and RPS6KA1, respectively, activate the transcription factor activity but also promote ubiquitination and subsequent degradation by the proteasome. Phosphorylated in response to blue light (415nm). Post-translationally, ubiquitinated by the SCF(BTRC) and SCF(FBXW11) complexes following phosphorylation ar Ser-5 by MTOR, leading to its degradation by the proteasome. Ubiquitinated following phosphorylation at Ser-180, leading to subsequent degradation by the proteasome. Deubiquitinated by USP13, preventing its degradation. In terms of tissue distribution, in the adult, expressed at high levels in the heart, skin, skeletal muscle, intestine, stomach, kidney, ovary, lung, spleen and brain. In the embryo, expressed in developing eye, ear, skin and heart. Isoform M is expressed in melanocytes and also in the embryonic and adult heart while isoform A and isoform H are more widely expressed.

It localises to the nucleus. Its subcellular location is the cytoplasm. It is found in the lysosome membrane. Its function is as follows. Transcription factor that acts as a master regulator of melanocyte survival and differentiation as well as melanosome biogenesis. Binds to M-boxes (5'-TCATGTG-3') and symmetrical DNA sequences (E-boxes) (5'-CACGTG-3') found in the promoter of pigmentation genes, such as tyrosinase (TYR). Involved in the cellular response to amino acid availability by acting downstream of MTOR: in the presence of nutrients, MITF phosphorylation by MTOR promotes its inactivation. Upon starvation or lysosomal stress, inhibition of MTOR induces MITF dephosphorylation, resulting in transcription factor activity. Plays an important role in melanocyte development by regulating the expression of tyrosinase (TYR) and tyrosinase-related protein 1 (TYRP1). Plays a critical role in the differentiation of various cell types, such as neural crest-derived melanocytes, mast cells, osteoclasts and optic cup-derived retinal pigment epithelium. This chain is Microphthalmia-associated transcription factor (Mitf), found in Mus musculus (Mouse).